The following is a 207-amino-acid chain: MTMDGDSSTTDASQLGISADYIGGSHYVIQPHDDTEDSMNDHEDTNGSKESFREQDIYLPIANVARIMKNAIPQTGKIAKDAKECVQECVSEFISFITSEASERCHQEKRKTINGEDILFAMSTLGFDSYVEPLKLYLQKFREAMKGEKGIGGAVTATDGLSEELTDEAFTNQLPAGLITADGQQQNVMVYTTSYQQISGVQQIQFS.

The interval 1 to 52 is a domain; that stretch reads MTMDGDSSTTDASQLGISADYIGGSHYVIQPHDDTEDSMNDHEDTNGSKESF. Positions 27–52 are disordered; the sequence is YVIQPHDDTEDSMNDHEDTNGSKESF. Over residues 39–52 the composition is skewed to basic and acidic residues; it reads MNDHEDTNGSKESF. Positions 53 to 142 are b domain; sequence REQDIYLPIA…PLKLYLQKFR (90 aa). Residues 59–65 mediate DNA binding; it reads LPIANVA. The tract at residues 86-97 is subunit association domain (SAD); the sequence is VQECVSEFISFI. Residue K140 forms a Glycyl lysine isopeptide (Lys-Gly) (interchain with G-Cter in ubiquitin) linkage. Positions 143–207 are c domain; sequence EAMKGEKGIG…ISGVQQIQFS (65 aa).

The protein belongs to the NFYB/HAP3 subunit family. Heterotrimeric transcription factor composed of three components, NF-YA, NF-YB and NF-YC. NF-YB and NF-YC must interact and dimerize for NF-YA association and DNA binding. Interacts with C1QBP. Monoubiquitination at Lys-140 plays an important role in transcriptional activation by allowing the deposition of histone H3 methylations as well as histone H2B monoubiquitination at 'Lys-121'.

The protein resides in the nucleus. Functionally, component of the sequence-specific heterotrimeric transcription factor (NF-Y) which specifically recognizes a 5'-CCAAT-3' box motif found in the promoters of its target genes. NF-Y can function as both an activator and a repressor, depending on its interacting cofactors. The polypeptide is Nuclear transcription factor Y subunit beta (NFYB) (Bos taurus (Bovine)).